The sequence spans 309 residues: Aromatic prenyltransferase (309 aa).

The protein belongs to the aromatic prenyltransferase family.

In terms of biological role, prenyltransferase that attaches isoprenoid moieties to carbon atoms of aromatic substrates in an enzyme-catalyzed Friedel-Crafts reaction. Shows specificity for dimethylallyl diphosphate (DMAPP) and does not accept geranyl diphosphate (GPP) or isopentenyl diphosphate (IPP). Prenylates the artificial substrate 2,7-dihydroxynaphthalene (2,7-DHN), as well as dihydrophenazine-1-carboxylic acid and 4-hydroxybenzoic acid at lower levels. Only traces of products are detected with aspulvinone E or flaviolin as substrates; and no product is formed with L-tryptophan, L-tyrosine, or 4-hydroxyphenylpyruvate. Ptf seems no to be involved in the prenylation reaction in the biosynthesis of aspulvinone H and J and the physiological function of ptf remains unknown. The protein is Aromatic prenyltransferase of Sclerotinia sclerotiorum (strain ATCC 18683 / 1980 / Ss-1) (White mold).